We begin with the raw amino-acid sequence, 736 residues long: Dimethylamine dehydrogenase (736 aa).

S-6-FMN cysteine is present on Cys-31. Residue 176-179 (YGAH) coordinates substrate. Residue Tyr-181 is the Proton donor of the active site. Residues Arg-229 and Arg-329 each coordinate FMN. Residues Cys-352, Cys-355, Cys-358, and Cys-371 each coordinate [4Fe-4S] cluster. Position 398-427 (398-427 (DVLIVGAGPAGSECARVLMERGYTVHLVDT)) interacts with ADP.

This sequence in the N-terminal section; belongs to the NADH:flavin oxidoreductase/NADH oxidase family. The cofactor is FMN. [4Fe-4S] cluster serves as cofactor.

The enzyme catalyses dimethylamine + oxidized [electron-transfer flavoprotein] + H2O + H(+) = methylamine + reduced [electron-transfer flavoprotein] + formaldehyde. This Hyphomicrobium sp. (strain x) protein is Dimethylamine dehydrogenase (dmd).